Here is a 403-residue protein sequence, read N- to C-terminus: D-galactonate dehydratase family member ManD (403 aa).

Substrate-binding residues include Asn37 and His122. The active-site Proton donor/acceptor is the Tyr159. Residue Asp211 participates in Mg(2+) binding. The active-site Proton donor/acceptor is the His213. Glu237 and Glu263 together coordinate Mg(2+). Glu263, Arg284, His313, Asp317, and Glu340 together coordinate substrate.

This sequence belongs to the mandelate racemase/muconate lactonizing enzyme family. GalD subfamily. Mg(2+) serves as cofactor.

It catalyses the reaction D-mannonate = 2-dehydro-3-deoxy-D-gluconate + H2O. It carries out the reaction D-gluconate = 2-dehydro-3-deoxy-D-gluconate + H2O. Its function is as follows. Has low dehydratase activity with D-mannonate and D-gluconate, suggesting that these are not physiological substrates and that it has no significant role in the in vivo degradation of these compounds. Has no detectable activity with a panel of 70 other acid sugars (in vitro). In Chromohalobacter salexigens (strain ATCC BAA-138 / DSM 3043 / CIP 106854 / NCIMB 13768 / 1H11), this protein is D-galactonate dehydratase family member ManD (manD).